The primary structure comprises 1110 residues: Guanylate cyclase 2D (1110 aa).

Positions 1 to 66 (MAGLQQGCHP…ADSLSLPAWA (66 aa)) are cleaved as a signal peptide. Over 67–475 (RETFTLGVLG…PNTLCIRGVQ (409 aa)) the chain is Extracellular. Cysteines 121 and 149 form a disulfide. N-linked (GlcNAc...) asparagine glycans are attached at residues Asn304 and Asn374. The chain crosses the membrane as a helical span at residues 476–500 (PLGSLLTLTITCVLALVGGFLAYFI). The Cytoplasmic portion of the chain corresponds to 501–1110 (RLGLQQLRLL…TGFAKLARVG (610 aa)). A disordered region spans residues 529 to 556 (TPSRRRPHVDSGSESRSVVDGGSPQSVI). A Protein kinase domain is found at 541–818 (SESRSVVDGG…PSLDQIYTQF (278 aa)). Positions 880-921 (MGTTVEPEYFDQVTIYFSDIVGFTTISALSEPIEVVGFLNDL) are interaction with NCALD. The region spanning 893–1023 (TIYFSDIVGF…DTVNTASRME (131 aa)) is the Guanylate cyclase domain.

It belongs to the adenylyl cyclase class-4/guanylyl cyclase family. As to quaternary structure, interacts (via the catalytic domain) with NCALD. Specifically expressed in a subpopulation of olfactory sensory neurons. Expressed in the cilia of the olfactory epithelium.

The protein resides in the cell projection. Its subcellular location is the cilium membrane. It catalyses the reaction GTP = 3',5'-cyclic GMP + diphosphate. With respect to regulation, activated by Ca(2+). Activated by NCALD in a Ca(2+)-dependent fashion. Its function is as follows. Functions as an olfactory receptor activated by a urine odorant, uroguanylin. Activated as well by the volatile semiochemicals carbon disulfide (CS2) and carbon dioxide (CO2). Has guanylate cyclase activity upon binding of the ligand. Activation of GUCY2D neurons leads to the cGMP-dependent activation of the CNGA3 channels, membrane depolarization and an increase in action potential frequency. Signaling pathways activated by GUCY2D may trigger social behaviors such as acquisition of food preference. This is Guanylate cyclase 2D (Gucy2d) from Rattus norvegicus (Rat).